We begin with the raw amino-acid sequence, 242 residues long: Glucosamine-6-phosphate deaminase (242 aa).

The active-site Proton acceptor; for enolization step is aspartate 71. The active-site For ring-opening step is asparagine 142. The active-site Proton acceptor; for ring-opening step is histidine 144. Glutamate 149 functions as the For ring-opening step in the catalytic mechanism.

It belongs to the glucosamine/galactosamine-6-phosphate isomerase family. NagB subfamily.

It catalyses the reaction alpha-D-glucosamine 6-phosphate + H2O = beta-D-fructose 6-phosphate + NH4(+). It functions in the pathway amino-sugar metabolism; N-acetylneuraminate degradation; D-fructose 6-phosphate from N-acetylneuraminate: step 5/5. Its function is as follows. Catalyzes the reversible isomerization-deamination of glucosamine 6-phosphate (GlcN6P) to form fructose 6-phosphate (Fru6P) and ammonium ion. The protein is Glucosamine-6-phosphate deaminase of Malacoplasma penetrans (strain HF-2) (Mycoplasma penetrans).